The chain runs to 2282 residues: Ectopic P granules protein 5 homolog (2282 aa).

It belongs to the EPG5 family.

In terms of biological role, involved in autophagy. In Aedes aegypti (Yellowfever mosquito), this protein is Ectopic P granules protein 5 homolog.